The sequence spans 144 residues: MLPGLAMSLSMDSFSVWMRKNLKSAYEGLVTQDIDFVFLSKKKKVFFFVEEKNSLNAKLRLPQRVIFMLFNEFLINDLSEWKFLGTDVLYVLEDGTVYFLNDKNEKVRVNIEDYIVYKLENYKIFKDFQIEEYMLKMLWDCRKN.

This is an uncharacterized protein from Archaeoglobus fulgidus (strain ATCC 49558 / DSM 4304 / JCM 9628 / NBRC 100126 / VC-16).